A 118-amino-acid chain; its full sequence is MADMEIQSNKMSITEETQVQTRKECGKRGRKPGRKTSTEKLDMKAKLERSRQSARECRARKKLRYQYLEELVADREKAVVALRTELERLIQWNNQLSESNTPTNNDQLLQELGILKQE.

Residues 1-20 (MADMEIQSNKMSITEETQVQ) are compositionally biased toward polar residues. The disordered stretch occupies residues 1–53 (MADMEIQSNKMSITEETQVQTRKECGKRGRKPGRKTSTEKLDMKAKLERSRQS). The segment covering 36–53 (TSTEKLDMKAKLERSRQS) has biased composition (basic and acidic residues). Positions 40-77 (KLDMKAKLERSRQSARECRARKKLRYQYLEELVADREK) are basic motif. Residues 40–90 (KLDMKAKLERSRQSARECRARKKLRYQYLEELVADREKAVVALRTELERLI) form the bZIP domain. Positions 82 to 89 (LRTELERL) are leucine-zipper.

It belongs to the bZIP family. ATF subfamily. In terms of assembly, homodimer. Interacts (via C-terminus) with REPTOR (via C-terminus).

The protein localises to the nucleus. Its subcellular location is the chromosome. In terms of biological role, transcriptional regulator that acts in the TORC1 signaling pathway to regulate energy homeostasis and promote survival during nutrient deprivation. Interacts with REPTOR to form a transcriptional activator complex that functions downstream of TORC1 to up-regulate the expression of most target genes induced by TORC1 inhibition. In the complex, acts to enhance the binding of the transcriptional activator REPTOR to the regulatory sequences of target genes. Under normal conditions TORC1 is active, inhibiting the formation of the REPTOR/REPTOR-BP complex by phosphorylating REPTOR and mediates its cytoplasmic retention by forming a docking site for 14-3-3 proteins. Upon TORC1 inhibition resulting from nutrient stress, REPTOR is recruited into the nucleus where it interacts with REPTOR-BP and together they maintain organismal metabolism by activating the expression of target stress response genes including those involved in glycogenesis and triglyceride biosynthesis. The complex also appears to negatively regulate some aspects of TORC1-dependent larval growth. This is REPTOR-binding partner from Drosophila melanogaster (Fruit fly).